The primary structure comprises 393 residues: uncharacterized protein (393 aa).

The tract at residues 345-393 is disordered; that stretch reads PNKWATDDAARREMERTRKARYRAKNRAVADPEDSPPGKRLRRGPKSST. The segment covering 349 to 361 has biased composition (basic and acidic residues); that stretch reads ATDDAARREMERT. Residues 383–393 are compositionally biased toward basic residues; it reads KRLRRGPKSST.

This is an uncharacterized protein from Ictalurid herpesvirus 1 (strain Auburn) (IcHV-1).